Consider the following 375-residue polypeptide: Protein abhd-3.2 (375 aa).

The AB hydrolase-1 domain maps to proline 108 to glycine 203. Catalysis depends on charge relay system residues serine 189, aspartate 315, and histidine 344.

The protein belongs to the AB hydrolase superfamily. AB hydrolase 4 family.

The protein is Protein abhd-3.2 of Caenorhabditis elegans.